The chain runs to 316 residues: 2,3-dihydroxyphenylpropionate/2,3-dihydroxicinnamic acid 1,2-dioxygenase (316 aa).

Residue His-115 is the Proton donor of the active site. Catalysis depends on His-180, which acts as the Proton acceptor.

This sequence belongs to the LigB/MhpB extradiol dioxygenase family. In terms of assembly, homotetramer. Requires Fe(2+) as cofactor.

It carries out the reaction 3-(2,3-dihydroxyphenyl)propanoate + O2 = (2Z,4E)-2-hydroxy-6-oxonona-2,4-dienedioate + H(+). The enzyme catalyses (2E)-3-(2,3-dihydroxyphenyl)prop-2-enoate + O2 = (2Z,4E,7E)-2-hydroxy-6-oxonona-2,4,7-trienedioate + H(+). The protein operates within aromatic compound metabolism; 3-phenylpropanoate degradation. Its function is as follows. Catalyzes the non-heme iron(II)-dependent oxidative cleavage of 2,3-dihydroxyphenylpropionic acid and 2,3-dihydroxicinnamic acid into 2-hydroxy-6-ketononadienedioate and 2-hydroxy-6-ketononatrienedioate, respectively. The polypeptide is 2,3-dihydroxyphenylpropionate/2,3-dihydroxicinnamic acid 1,2-dioxygenase (Rhodococcus rhodochrous).